Here is a 36-residue protein sequence, read N- to C-terminus: Photosystem II reaction center protein Y (36 aa).

Over 1–4 the chain is Lumenal; that stretch reads MDSR. Residues 5–23 traverse the membrane as a helical segment; the sequence is LLIVLIPVLAAASWAVYNI. The Stromal portion of the chain corresponds to 24–36; it reads GRVALQQFRKMTS.

This sequence belongs to the PsbY family. As to quaternary structure, PSII is composed of 1 copy each of membrane proteins PsbA, PsbB, PsbC, PsbD, PsbE, PsbF, PsbH, PsbI, PsbJ, PsbK, PsbL, PsbM, PsbT, PsbX, PsbY, PsbZ, Psb30/Ycf12, at least 3 peripheral proteins of the oxygen-evolving complex and a large number of cofactors. It forms dimeric complexes.

It localises to the plastid. It is found in the chloroplast thylakoid membrane. Functionally, loosely associated component of the core of photosystem II (PSII), it is not always seen in crystals. PSII is a light-driven water plastoquinone oxidoreductase, using light energy to abstract electrons from H(2)O, generating a proton gradient subsequently used for ATP formation. The polypeptide is Photosystem II reaction center protein Y (Porphyra purpurea (Red seaweed)).